A 37-amino-acid polypeptide reads, in one-letter code: Cytochrome b6-f complex subunit 5 (37 aa).

A helical membrane pass occupies residues 5–25 (LLSGIVLGLMPVTLAGLFTTA).

This sequence belongs to the PetG family. In terms of assembly, the 4 large subunits of the cytochrome b6-f complex are cytochrome b6, subunit IV (17 kDa polypeptide, PetD), cytochrome f and the Rieske protein, while the 4 small subunits are PetG, PetL, PetM and PetN. The complex functions as a dimer.

It is found in the plastid. The protein resides in the chloroplast thylakoid membrane. In terms of biological role, component of the cytochrome b6-f complex, which mediates electron transfer between photosystem II (PSII) and photosystem I (PSI), cyclic electron flow around PSI, and state transitions. PetG is required for either the stability or assembly of the cytochrome b6-f complex. The chain is Cytochrome b6-f complex subunit 5 from Ostreococcus tauri.